The primary structure comprises 79 residues: Small ribosomal subunit protein bS18 (79 aa).

It belongs to the bacterial ribosomal protein bS18 family. As to quaternary structure, part of the 30S ribosomal subunit. Forms a tight heterodimer with protein bS6.

Binds as a heterodimer with protein bS6 to the central domain of the 16S rRNA, where it helps stabilize the platform of the 30S subunit. The polypeptide is Small ribosomal subunit protein bS18 (Streptococcus pneumoniae (strain Hungary19A-6)).